A 317-amino-acid chain; its full sequence is Aquaporin-2 (317 aa).

Topologically, residues M1–R75 are cytoplasmic. Residues E76–A96 traverse the membrane as a helical segment. Residues E97 to W108 are Extracellular-facing. A helical membrane pass occupies residues L109–V129. The Cytoplasmic portion of the chain corresponds to S130 to P154. The NPA 1 signature appears at N135–A137. Residues M155–V175 form a helical membrane-spanning segment. Topologically, residues E176 to G208 are extracellular. Residues T209–V229 form a helical membrane-spanning segment. Topologically, residues T230–Q242 are cytoplasmic. The chain crosses the membrane as a helical span at residues G243–F263. Topologically, residues S264–L295 are extracellular. Residues N266 to A268 carry the NPA 2 motif. Residues V296–I316 form a helical membrane-spanning segment. D317 is a topological domain (cytoplasmic).

It belongs to the MIP/aquaporin (TC 1.A.8) family.

The protein resides in the cell membrane. The enzyme catalyses H2O(in) = H2O(out). It carries out the reaction glycerol(in) = glycerol(out). Functionally, water channel required to facilitate the transport of water across membranes. Contributes to water uptake of spores during the early stages of spore germination. Aquaporins AQP1 and AQP2 act as extracellular pH sensors and enable the spores to hydrate under favorable conditions and to commence germination. Wounded vegetables and fruit present acidic pH, so the optimal pH range for germination is adapted to the relevant host pH. In Rhizopus delemar (strain RA 99-880 / ATCC MYA-4621 / FGSC 9543 / NRRL 43880) (Mucormycosis agent), this protein is Aquaporin-2.